Here is a 757-residue protein sequence, read N- to C-terminus: Polyribonucleotide nucleotidyltransferase (757 aa).

Asp-487 and Asp-493 together coordinate Mg(2+). The KH domain maps to 554–613; the sequence is PRITTVRVKPDQIRLIIGPGGKTIKGIVDQTGVAIDVEDDGTVNVASADSDAVKRALDII. An S1 motif domain is found at 623–691; it reads GATYKGTVKR…REGKIRLSRR (69 aa). The segment at 697-757 is disordered; that stretch reads PEGEEGDRAR…PPRERRERRS (61 aa). 2 stretches are compositionally biased toward basic and acidic residues: residues 702-711 and 719-757; these read GDRARERMAQ and PRRD…ERRS.

The protein belongs to the polyribonucleotide nucleotidyltransferase family. It depends on Mg(2+) as a cofactor.

It is found in the cytoplasm. It carries out the reaction RNA(n+1) + phosphate = RNA(n) + a ribonucleoside 5'-diphosphate. In terms of biological role, involved in mRNA degradation. Catalyzes the phosphorolysis of single-stranded polyribonucleotides processively in the 3'- to 5'-direction. The chain is Polyribonucleotide nucleotidyltransferase from Sorangium cellulosum (strain So ce56) (Polyangium cellulosum (strain So ce56)).